Reading from the N-terminus, the 415-residue chain is Serine--tRNA ligase (415 aa).

231–233 (TAE) is an L-serine binding site. Position 262 to 264 (262 to 264 (RSE)) interacts with ATP. E285 contacts L-serine. ATP is bound at residue 349–352 (EISS). An L-serine-binding site is contributed by S383.

It belongs to the class-II aminoacyl-tRNA synthetase family. Type-1 seryl-tRNA synthetase subfamily. Homodimer. The tRNA molecule binds across the dimer.

It localises to the cytoplasm. It carries out the reaction tRNA(Ser) + L-serine + ATP = L-seryl-tRNA(Ser) + AMP + diphosphate + H(+). The enzyme catalyses tRNA(Sec) + L-serine + ATP = L-seryl-tRNA(Sec) + AMP + diphosphate + H(+). It functions in the pathway aminoacyl-tRNA biosynthesis; selenocysteinyl-tRNA(Sec) biosynthesis; L-seryl-tRNA(Sec) from L-serine and tRNA(Sec): step 1/1. Its function is as follows. Catalyzes the attachment of serine to tRNA(Ser). Is also able to aminoacylate tRNA(Sec) with serine, to form the misacylated tRNA L-seryl-tRNA(Sec), which will be further converted into selenocysteinyl-tRNA(Sec). This chain is Serine--tRNA ligase, found in Helicobacter acinonychis (strain Sheeba).